Here is a 627-residue protein sequence, read N- to C-terminus: Putative ankyrin repeat protein L122 (627 aa).

ANK repeat units lie at residues 61–94 (KGWT…DVHI), 98–130 (KGRT…DINS), 153–186 (HACY…DPNI), 190–223 (YGKT…NANH), 228–259 (AETV…DINH), 263–296 (IGFT…NINL), 300–333 (DGFT…DIND), 337–370 (NNVT…DLEI), 374–407 (YDWT…NVNV), 411–444 (LGHT…NPNL), 448–480 (DKNT…DSNT), and 491–523 (REYN…NYSD).

In Acanthamoeba polyphaga (Amoeba), this protein is Putative ankyrin repeat protein L122.